The following is a 181-amino-acid chain: Ribulose bisphosphate carboxylase small subunit, chloroplastic 1 (181 aa).

The transit peptide at 1–57 (MASSIVSSAAVATRSNVAQASMVAPFTGLKSAASFPVTKKNNNVDITSLASNGGRVR) directs the protein to the chloroplast.

The protein belongs to the RuBisCO small chain family. Heterohexadecamer of 8 large and 8 small subunits.

The protein localises to the plastid. Its subcellular location is the chloroplast. Functionally, ruBisCO catalyzes two reactions: the carboxylation of D-ribulose 1,5-bisphosphate, the primary event in carbon dioxide fixation, as well as the oxidative fragmentation of the pentose substrate. Both reactions occur simultaneously and in competition at the same active site. Although the small subunit is not catalytic it is essential for maximal activity. In Solanum tuberosum (Potato), this protein is Ribulose bisphosphate carboxylase small subunit, chloroplastic 1.